We begin with the raw amino-acid sequence, 119 residues long: Methylglyoxal synthase (119 aa).

One can recognise an MGS-like domain in the interval 1–119; sequence MKIALIAHDK…ESAKLIMADI (119 aa). Substrate contacts are provided by residues histidine 8, lysine 12, 34-37, and 54-55; these read TGTT and SG. The active-site Proton donor/acceptor is aspartate 60. Histidine 87 is a binding site for substrate.

The protein belongs to the methylglyoxal synthase family.

The catalysed reaction is dihydroxyacetone phosphate = methylglyoxal + phosphate. In terms of biological role, catalyzes the formation of methylglyoxal from dihydroxyacetone phosphate. This is Methylglyoxal synthase from Clostridium perfringens (strain 13 / Type A).